Reading from the N-terminus, the 323-residue chain is tRNA U34 carboxymethyltransferase (323 aa).

Carboxy-S-adenosyl-L-methionine contacts are provided by residues Lys-91, Trp-105, Lys-110, Gly-130, 152 to 154 (DPT), 181 to 182 (IE), Met-196, Tyr-200, and Arg-315.

This sequence belongs to the class I-like SAM-binding methyltransferase superfamily. CmoB family. As to quaternary structure, homotetramer.

The enzyme catalyses carboxy-S-adenosyl-L-methionine + 5-hydroxyuridine(34) in tRNA = 5-carboxymethoxyuridine(34) in tRNA + S-adenosyl-L-homocysteine + H(+). In terms of biological role, catalyzes carboxymethyl transfer from carboxy-S-adenosyl-L-methionine (Cx-SAM) to 5-hydroxyuridine (ho5U) to form 5-carboxymethoxyuridine (cmo5U) at position 34 in tRNAs. The chain is tRNA U34 carboxymethyltransferase from Salmonella gallinarum (strain 287/91 / NCTC 13346).